A 159-amino-acid polypeptide reads, in one-letter code: Probable E3 ubiquitin-protein ligase RHA1A (159 aa).

The RING-type; atypical zinc-finger motif lies at 86–130 (CTVCLSDFESDDKVRQLPKCGHVFHHYCLDRWIVDYNKMKCPVCR).

Predominantly expressed in stems.

The enzyme catalyses S-ubiquitinyl-[E2 ubiquitin-conjugating enzyme]-L-cysteine + [acceptor protein]-L-lysine = [E2 ubiquitin-conjugating enzyme]-L-cysteine + N(6)-ubiquitinyl-[acceptor protein]-L-lysine.. It functions in the pathway protein modification; protein ubiquitination. Functionally, probable E3 ubiquitin-protein ligase that may possess E3 ubiquitin ligase activity in vitro. This Arabidopsis thaliana (Mouse-ear cress) protein is Probable E3 ubiquitin-protein ligase RHA1A.